Here is a 1057-residue protein sequence, read N- to C-terminus: Carbamoyl phosphate synthase large chain (1057 aa).

Residues 1–401 (MPKNKDINTI…SLLKAIRSLE (401 aa)) are carboxyphosphate synthetic domain. Residues arginine 129, arginine 169, glycine 175, glycine 176, lysine 208, isoleucine 210, glutamate 215, glycine 241, isoleucine 242, histidine 243, glutamine 284, and glutamate 298 each coordinate ATP. Residues 133 to 327 (RSLMNELDVP…IAKLAAKIAV (195 aa)) form the ATP-grasp 1 domain. The Mg(2+) site is built by glutamine 284, glutamate 298, and asparagine 300. Glutamine 284, glutamate 298, and asparagine 300 together coordinate Mn(2+). The tract at residues 402 to 546 (YGVHHLGLPN…YGTYERDNES (145 aa)) is oligomerization domain. Residues 547-929 (VVTDKEKVIV…ALFKGLTASG (383 aa)) are carbamoyl phosphate synthetic domain. The ATP-grasp 2 domain maps to 671–861 (EALLNKIDVP…MAQLAMRAIL (191 aa)). Arginine 707, arginine 746, leucine 748, glutamate 752, glycine 777, valine 778, histidine 779, serine 780, glutamine 820, and glutamate 832 together coordinate ATP. The Mg(2+) site is built by glutamine 820, glutamate 832, and asparagine 834. Glutamine 820, glutamate 832, and asparagine 834 together coordinate Mn(2+). In terms of domain architecture, MGS-like spans 930-1057 (VEVKDHGTVL…ESMSFTMKQM (128 aa)). Residues 930-1057 (VEVKDHGTVL…ESMSFTMKQM (128 aa)) form an allosteric domain region.

The protein belongs to the CarB family. Composed of two chains; the small (or glutamine) chain promotes the hydrolysis of glutamine to ammonia, which is used by the large (or ammonia) chain to synthesize carbamoyl phosphate. Tetramer of heterodimers (alpha,beta)4. The cofactor is Mg(2+). Requires Mn(2+) as cofactor.

It carries out the reaction hydrogencarbonate + L-glutamine + 2 ATP + H2O = carbamoyl phosphate + L-glutamate + 2 ADP + phosphate + 2 H(+). The catalysed reaction is hydrogencarbonate + NH4(+) + 2 ATP = carbamoyl phosphate + 2 ADP + phosphate + 2 H(+). Its pathway is amino-acid biosynthesis; L-arginine biosynthesis; carbamoyl phosphate from bicarbonate: step 1/1. The protein operates within pyrimidine metabolism; UMP biosynthesis via de novo pathway; (S)-dihydroorotate from bicarbonate: step 1/3. In terms of biological role, large subunit of the glutamine-dependent carbamoyl phosphate synthetase (CPSase). CPSase catalyzes the formation of carbamoyl phosphate from the ammonia moiety of glutamine, carbonate, and phosphate donated by ATP, constituting the first step of 2 biosynthetic pathways, one leading to arginine and/or urea and the other to pyrimidine nucleotides. The large subunit (synthetase) binds the substrates ammonia (free or transferred from glutamine from the small subunit), hydrogencarbonate and ATP and carries out an ATP-coupled ligase reaction, activating hydrogencarbonate by forming carboxy phosphate which reacts with ammonia to form carbamoyl phosphate. The polypeptide is Carbamoyl phosphate synthase large chain (Staphylococcus carnosus (strain TM300)).